The sequence spans 531 residues: Non-muscle caldesmon (531 aa).

Residues 20-200 are myosin and calmodulin-binding; the sequence is AYQRNDDDEE…LKGGNLGENQ (181 aa). Residues 21–379 are disordered; it reads YQRNDDDEEE…KKPFKCFTPK (359 aa). A compositionally biased stretch (basic and acidic residues) spans 41 to 50; the sequence is QERLRQKQEE. Over residues 54–68 the composition is skewed to polar residues; the sequence is GQVTDQVEAHVQNSA. A compositionally biased stretch (basic and acidic residues) spans 93 to 116; sequence RLARREERRQKRLQEALERQKEFD. Over residues 120–133 the composition is skewed to polar residues; that stretch reads TDGSLSVPSRRMQN. Phosphoserine is present on Ser-123. Over residues 143 to 156 the composition is skewed to basic and acidic residues; that stretch reads GEEKGESRSGRYEM. Positions 162–172 are enriched in polar residues; sequence VITSYQKNSYQ. The segment covering 200-227 has biased composition (basic and acidic residues); sequence QIKDEKIKKDKEPKEEVKNFLDRKKGFT. The residue at position 249 (Ser-249) is a Phosphoserine; by CDK1. Composition is skewed to basic and acidic residues over residues 271 to 297 and 305 to 372; these read AGKRLEELRRRRGETESEEFEKLKQKQ and EELK…DKKP. Residues 303 to 360 are tropomyosin-binding; sequence ELEELKKKREERRKVLEEEEQRRKQEEADRKAREEEEKRRLKEEIERRRAEAAEKRQK. Position 382 is a phosphoserine (Ser-382). A Glycyl lysine isopeptide (Lys-Gly) (interchain with G-Cter in SUMO2) cross-link involves residue Lys-384. A strong actin-binding region spans residues 392 to 424; it reads LNKSVQKSGVKSTHQAAVVSKIDSRLEQYTNAI. The residue at position 395 (Ser-395) is a Phosphoserine. Residues 402 to 412 are tropomyosin-binding; sequence KSTHQAAVVSK. Residues 454–460 are calmodulin-binding; it reads WEKGSVF. A disordered region spans residues 458-531; that stretch reads SVFSSPSASG…VDKVTSPTKV (74 aa). Over residues 459–471 the composition is skewed to polar residues; it reads VFSSPSASGTPNK. At Ser-462 the chain carries Phosphoserine; by CDK1. Thr-468 is subject to Phosphothreonine; by CDK1. Ser-491 and Ser-497 each carry phosphoserine; by CDK1. Residues 503–522 are compositionally biased toward basic and acidic residues; it reads SDLRPGDVSGKRNLWEKQSV. A weak actin-binding region spans residues 506–531; sequence RPGDVSGKRNLWEKQSVDKVTSPTKV. Ser-527 is subject to Phosphoserine; by CDK1.

It belongs to the caldesmon family. Post-translationally, in non-muscle cells, phosphorylation by CDK1 during mitosis causes caldesmon to dissociate from microfilaments. Phosphorylation reduces caldesmon binding to actin, myosin, and calmodulin as well as its inhibition of actomyosin ATPase activity. Phosphorylation also occurs in both quiescent and dividing smooth muscle cells with similar effects on the interaction with actin and calmodulin and on microfilaments reorganization. CDK1-mediated phosphorylation promotes Schwann cell migration during peripheral nerve regeneration. High-molecular-weight caldesmon (h-caldesmon) is predominantly expressed in smooth muscles, whereas low-molecular-weight caldesmon (l-caldesmon) is widely distributed in non-muscle tissues and cells. Not expressed in skeletal muscle or heart.

Its subcellular location is the cytoplasm. It is found in the cytoskeleton. It localises to the myofibril. The protein localises to the stress fiber. Functionally, actin- and myosin-binding protein implicated in the regulation of actomyosin interactions in smooth muscle and nonmuscle cells (could act as a bridge between myosin and actin filaments). Stimulates actin binding of tropomyosin which increases the stabilization of actin filament structure. In muscle tissues, inhibits the actomyosin ATPase by binding to F-actin. This inhibition is attenuated by calcium-calmodulin and is potentiated by tropomyosin. Interacts with actin, myosin, two molecules of tropomyosin and with calmodulin. Also plays an essential role during cellular mitosis and receptor capping. Involved in Schwann cell migration during peripheral nerve regeneration. The sequence is that of Non-muscle caldesmon (Cald1) from Rattus norvegicus (Rat).